The following is a 133-amino-acid chain: Large ribosomal subunit protein bL17 (133 aa).

This sequence belongs to the bacterial ribosomal protein bL17 family. In terms of assembly, part of the 50S ribosomal subunit. Contacts protein L32.

This Thermodesulfovibrio yellowstonii (strain ATCC 51303 / DSM 11347 / YP87) protein is Large ribosomal subunit protein bL17.